A 479-amino-acid chain; its full sequence is Splicing factor ESS-2 homolog (479 aa).

Position 1 is an N-acetylmethionine (Met-1). Disordered regions lie at residues 1-38 and 95-152; these read MGTP…RSRQ and GKIS…PSLD. The residue at position 3 (Thr-3) is a Phosphothreonine. The span at 7–19 shows a compositional bias: low complexity; it reads SAGALFLSSASAP. Residues 135–145 show a composition bias toward acidic residues; the sequence is DDGEAGEEEEK. Lys-145 is covalently cross-linked (Glycyl lysine isopeptide (Lys-Gly) (interchain with G-Cter in SUMO2)). Ser-295 is subject to Phosphoserine. The residue at position 389 (Thr-389) is a Phosphothreonine. Phosphoserine occurs at positions 394 and 398. Positions 415-479 are disordered; it reads RALRASYTPS…PARRKASDFF (65 aa). Residues 433–454 are compositionally biased toward low complexity; that stretch reads TPAGGPQTPTSTPAPGSATRTP. The segment covering 455–466 has biased composition (polar residues); it reads LTQDPASITDNL.

Belongs to the ESS2 family. In terms of assembly, identified in the spliceosome C complex. Interacts with FRA10AC1. In terms of tissue distribution, in the adult, widely expressed with highest expression in the testis and brain. Also widely expressed in the embryo with highest levels in the anterior pons.

It localises to the nucleus. In terms of biological role, may be involved in pre-mRNA splicing. This Mus musculus (Mouse) protein is Splicing factor ESS-2 homolog (Ess2).